A 103-amino-acid chain; its full sequence is MVKVIDVGRVVVKVLGREAGRKAVVVDIVDENYVVITGPKQLTGVRRRRVNVNHIEPTDKKVEVKRGASDEEVLKAVEAAGLADYMRERVKPQMFGITASEVR.

Belongs to the eukaryotic ribosomal protein eL14 family.

This is Large ribosomal subunit protein eL14 from Pyrobaculum neutrophilum (strain DSM 2338 / JCM 9278 / NBRC 100436 / V24Sta) (Thermoproteus neutrophilus).